Reading from the N-terminus, the 310-residue chain is Putative HTH-type transcriptional regulatory protein LS215_1371 (310 aa).

Residues 125–180 (LKHKREEMGYSIGDVAKFLGVSRKAIYDYEKGDSDVSLEVAEKLIDLFGDDIIGDV) enclose the HTH cro/C1-type domain. Positions 136-155 (IGDVAKFLGVSRKAIYDYEK) form a DNA-binding region, H-T-H motif.

The polypeptide is Putative HTH-type transcriptional regulatory protein LS215_1371 (Saccharolobus islandicus (strain L.S.2.15 / Lassen #1) (Sulfolobus islandicus)).